A 712-amino-acid polypeptide reads, in one-letter code: Transcriptional regulator GZF3 (712 aa).

The span at 1–13 shows a compositional bias: polar residues; the sequence is MSMSDIQQRPQIP. Disordered regions lie at residues 1 to 20, 27 to 135, 173 to 280, 377 to 533, and 596 to 712; these read MSMS…TAAV, NVNT…GPVC, SLKT…HHHL, DVSS…GNNF, and LNNN…KVKI. 2 stretches are compositionally biased toward low complexity: residues 27 to 84 and 107 to 131; these read NVNT…EQSS and PKTG…ISMS. The GATA-type zinc finger occupies 135 to 159; it reads CGNCQTQTTPLWRRDETGQVLCNAC. Residues 186 to 199 show a composition bias toward low complexity; sequence KQNGSNSQSSKSSG. Basic residues predominate over residues 213–223; the sequence is GKKSPKSKKKS. A compositionally biased stretch (polar residues) spans 246-261; that stretch reads ATSNNTPTFKSTTSQS. A compositionally biased stretch (basic residues) spans 268-280; it reads NHHHQHHNHHHHL. Over residues 379–414 the composition is skewed to low complexity; sequence SSINGSSTSLSSSSASSSIFSSVAPSTSSSSSLSNG. Polar residues-rich tracts occupy residues 429-447 and 484-498; these read SKIS…TPLQ and QQSM…RSPI. Composition is skewed to low complexity over residues 499–532 and 596–616; these read NGNQ…NGNN and LNNN…QPQQ. Positions 545 to 598 form a coiled coil; it reads TRISELELVNDLYRTRIMELEAMEQAARLRENSMKKRLDEVMNLQINYQNLLNN. Positions 631–667 are enriched in polar residues; sequence DQGSQSISPNVSITGSTTITSPNSRSKIISETTPTHH.

It localises to the nucleus. Its function is as follows. Probable transcription factor involved in response to fluconazole, LiCl, and copper. This chain is Transcriptional regulator GZF3 (GZF3), found in Candida albicans (strain SC5314 / ATCC MYA-2876) (Yeast).